Consider the following 566-residue polypeptide: Putative UDP-glucuronate:xylan alpha-glucuronosyltransferase 5 (566 aa).

Residues 17–37 (LILISLSFLGLLLNFKPLFLL) traverse the membrane as a helical; Signal-anchor for type II membrane protein segment. Residues Asp372 and Asp374 each contribute to the Mn(2+) site. Substrate-binding positions include 372-374 (DAD), 401-403 (NSG), 428-432 (NGGDQ), and 475-480 (HYLGLK). Mn(2+) is bound at residue His475.

Belongs to the glycosyltransferase 8 family. Glycogenin subfamily. Requires Mn(2+) as cofactor.

It localises to the golgi apparatus membrane. In terms of biological role, may be involved in the substitutions of the xylan backbone in stem glucuronoxylan. This chain is Putative UDP-glucuronate:xylan alpha-glucuronosyltransferase 5 (GUX5), found in Arabidopsis thaliana (Mouse-ear cress).